The following is a 160-amino-acid chain: Cytochrome c-type biogenesis protein CcmE (160 aa).

Topologically, residues 1–8 are cytoplasmic; sequence MNPRRKNR. A helical; Signal-anchor for type II membrane protein membrane pass occupies residues 9–29; the sequence is LILVMLVLVGLGLATALVMYA. The Periplasmic segment spans residues 30–160; sequence LRSNIDLFYT…AVGDNSVRPS (131 aa). Positions 130 and 134 each coordinate heme. A compositionally biased stretch (basic and acidic residues) spans 133–148; that stretch reads KYTPPEIEDAMKKDHP. The interval 133-160 is disordered; sequence KYTPPEIEDAMKKDHPAQAVGDNSVRPS.

This sequence belongs to the CcmE/CycJ family.

Its subcellular location is the cell inner membrane. Heme chaperone required for the biogenesis of c-type cytochromes. Transiently binds heme delivered by CcmC and transfers the heme to apo-cytochromes in a process facilitated by CcmF and CcmH. The protein is Cytochrome c-type biogenesis protein CcmE of Erwinia tasmaniensis (strain DSM 17950 / CFBP 7177 / CIP 109463 / NCPPB 4357 / Et1/99).